Here is a 406-residue protein sequence, read N- to C-terminus: S-adenosylmethionine synthase (406 aa).

Histidine 16 contacts ATP. Aspartate 18 is a binding site for Mg(2+). Residue glutamate 44 participates in K(+) binding. Glutamate 57 and glutamine 109 together coordinate L-methionine. Residues 109-119 are flexible loop; the sequence is QSPQIAQGVDE. ATP contacts are provided by residues 174 to 176, 249 to 250, aspartate 258, 264 to 265, alanine 281, and lysine 285; these read DAK, RF, and RK. Aspartate 258 contacts L-methionine. An L-methionine-binding site is contributed by lysine 289.

Belongs to the AdoMet synthase family. In terms of assembly, homotetramer; dimer of dimers. The cofactor is Mg(2+). K(+) serves as cofactor.

The protein localises to the cytoplasm. It carries out the reaction L-methionine + ATP + H2O = S-adenosyl-L-methionine + phosphate + diphosphate. It functions in the pathway amino-acid biosynthesis; S-adenosyl-L-methionine biosynthesis; S-adenosyl-L-methionine from L-methionine: step 1/1. Catalyzes the formation of S-adenosylmethionine (AdoMet) from methionine and ATP. The overall synthetic reaction is composed of two sequential steps, AdoMet formation and the subsequent tripolyphosphate hydrolysis which occurs prior to release of AdoMet from the enzyme. The sequence is that of S-adenosylmethionine synthase from Sphingopyxis alaskensis (strain DSM 13593 / LMG 18877 / RB2256) (Sphingomonas alaskensis).